We begin with the raw amino-acid sequence, 169 residues long: MSSKELQEGQDGLVEKLVSVRRVAKVVKGGRVFGFSALTVVGDGEGRVGYGSGKANEVPVAIKKAMEKARRNMKDVHLDGGTLQYPINFKQGAANIVMLPASDGTGIIAGGAMRAVLEAAGVKDVLAKCVGTTRPVNVVRSTVNALTGMSSPELIAAKRGKSVEEILGE.

One can recognise an S5 DRBM domain in the interval 13–76 (LVEKLVSVRR…EKARRNMKDV (64 aa)).

The protein belongs to the universal ribosomal protein uS5 family. In terms of assembly, part of the 30S ribosomal subunit. Contacts proteins S4 and S8.

With S4 and S12 plays an important role in translational accuracy. Its function is as follows. Located at the back of the 30S subunit body where it stabilizes the conformation of the head with respect to the body. This chain is Small ribosomal subunit protein uS5, found in Hydrogenovibrio crunogenus (strain DSM 25203 / XCL-2) (Thiomicrospira crunogena).